The following is a 295-amino-acid chain: Hepatic leukemia factor (295 aa).

Residues 34-52 (LHPEDAFSKDRDKGKKLDD) are compositionally biased toward basic and acidic residues. Disordered regions lie at residues 34 to 69 (LHPE…GPTL) and 93 to 160 (SENG…NRNT). In terms of domain architecture, bZIP spans 225–288 (DDKYWARRRK…GKCKNILAKY (64 aa)). Positions 227–247 (KYWARRRKNNMAAKRSRDARR) are basic motif. A leucine-zipper region spans residues 248–255 (LKENQIAI).

It belongs to the bZIP family. PAR subfamily. In terms of assembly, binds DNA specifically as homodimer or heterodimer with other PAR factors. Isoform HLF43 is abundant in brain, liver and kidney. Isoform HLF36 is expressed only in the liver. Both isoforms accumulate in the liver with different circadian amplitudes. Isoform HLF36 reaches peak expression levels between 8 and 12 p.m. Isoform HLF43 displays a more pronounced fluctuation through the day.

It localises to the nucleus. This is Hepatic leukemia factor (Hlf) from Rattus norvegicus (Rat).